The primary structure comprises 228 residues: ATP synthase subunit a (228 aa).

The next 6 helical transmembrane spans lie at 19 to 39 (AIYIFHFLLVVAITMFIAVAV), 81 to 101 (LIATIGFIVFLSNIIGLIPGF), 107 to 127 (SLNLTLSLTLCVFFYYHFEGI), 136 to 156 (FAGFCGPVKAIAPFMFVIEVI), 178 to 198 (LFLLVMLTLAPVLVPMIPYAL), and 204 to 224 (ILQAFIFMVLSYVYLAGAVVV).

The protein belongs to the ATPase A chain family. In terms of assembly, F-type ATPases have 2 components, CF(1) - the catalytic core - and CF(0) - the membrane proton channel. CF(1) has five subunits: alpha(3), beta(3), gamma(1), delta(1), epsilon(1). CF(0) has three main subunits: a(1), b(2) and c(9-12). The alpha and beta chains form an alternating ring which encloses part of the gamma chain. CF(1) is attached to CF(0) by a central stalk formed by the gamma and epsilon chains, while a peripheral stalk is formed by the delta and b chains.

Its subcellular location is the cell inner membrane. Key component of the proton channel; it plays a direct role in the translocation of protons across the membrane. The chain is ATP synthase subunit a from Campylobacter hominis (strain ATCC BAA-381 / DSM 21671 / CCUG 45161 / LMG 19568 / NCTC 13146 / CH001A).